The chain runs to 147 residues: Ribosomal RNA large subunit methyltransferase H (147 aa).

S-adenosyl-L-methionine-binding positions include Leu-64, Gly-96, and 115–120 (FSKMTF).

The protein belongs to the RNA methyltransferase RlmH family. In terms of assembly, homodimer.

It localises to the cytoplasm. It carries out the reaction pseudouridine(1915) in 23S rRNA + S-adenosyl-L-methionine = N(3)-methylpseudouridine(1915) in 23S rRNA + S-adenosyl-L-homocysteine + H(+). In terms of biological role, specifically methylates the pseudouridine at position 1915 (m3Psi1915) in 23S rRNA. In Acholeplasma laidlawii (strain PG-8A), this protein is Ribosomal RNA large subunit methyltransferase H.